A 428-amino-acid chain; its full sequence is 3-phosphoshikimate 1-carboxyvinyltransferase (428 aa).

3-phosphoshikimate-binding residues include Lys20, Ser21, and Arg25. Residue Lys20 coordinates phosphoenolpyruvate. The phosphoenolpyruvate site is built by Gly92 and Arg120. Residues Ser166, Gln168, Asp314, and Lys341 each contribute to the 3-phosphoshikimate site. Gln168 contributes to the phosphoenolpyruvate binding site. The active-site Proton acceptor is the Asp314. Phosphoenolpyruvate contacts are provided by Arg345 and Arg387.

The protein belongs to the EPSP synthase family. In terms of assembly, monomer.

The protein resides in the cytoplasm. The catalysed reaction is 3-phosphoshikimate + phosphoenolpyruvate = 5-O-(1-carboxyvinyl)-3-phosphoshikimate + phosphate. The protein operates within metabolic intermediate biosynthesis; chorismate biosynthesis; chorismate from D-erythrose 4-phosphate and phosphoenolpyruvate: step 6/7. Functionally, catalyzes the transfer of the enolpyruvyl moiety of phosphoenolpyruvate (PEP) to the 5-hydroxyl of shikimate-3-phosphate (S3P) to produce enolpyruvyl shikimate-3-phosphate and inorganic phosphate. The sequence is that of 3-phosphoshikimate 1-carboxyvinyltransferase from Listeria monocytogenes serotype 4a (strain HCC23).